We begin with the raw amino-acid sequence, 545 residues long: Probable zinc metalloprotease EGY2, chloroplastic (545 aa).

The transit peptide at 1-63 (MQLPAMSCSP…QIRNRRFVCQ (63 aa)) directs the protein to the chloroplast. Positions 66 to 142 (TETEPDGDGN…DATPASDAQE (77 aa)) are disordered. Residues 68–85 (TEPDGDGNGDEEKEELGD) show a composition bias toward acidic residues. Composition is skewed to polar residues over residues 88-109 (SSPS…TNAD) and 117-129 (NTEP…TVQN). Transmembrane regions (helical) follow at residues 256–276 (AVPE…TLLL), 300–320 (VYGA…HILA), 325–345 (GIKL…FGAI), 363–383 (AAGP…GFIL), 426–446 (PLVL…IPAG), 473–493 (LLGI…LIFF), and 513–533 (YISI…PYPF).

The protein belongs to the peptidase M50B family.

It localises to the plastid. It is found in the chloroplast membrane. Its function is as follows. Probable membrane-associated metalloprotease that may be involved in chloroplast development. The protein is Probable zinc metalloprotease EGY2, chloroplastic (EGY2) of Oryza sativa subsp. indica (Rice).